Consider the following 707-residue polypeptide: Protein kinase C theta type (707 aa).

In terms of domain architecture, C2 spans 1-107 (MSPFLRIGLS…KNNGRTEIWL (107 aa)). Phosphotyrosine; by LCK is present on Tyr90. A Phorbol-ester/DAG-type 1 zinc finger spans residues 159–209 (CHEFTATFFPQPTFCSVCHEFVWGLNKQGYQCRQCNAAIHKKCIDKVIAKC). Phosphothreonine; by autocatalysis is present on Thr219. A Phorbol-ester/DAG-type 2 zinc finger spans residues 231-281 (PHRFKVYNYKSPTFCEHCGTLLWGLARQGLKCDACGMNVHHRCQTKVANLC). A disordered region spans residues 327 to 365 (ETRPPCVPTPGKREPQGISWDSPLDGSNKSAGPPEPEVS). Ser348 carries the post-translational modification Phosphoserine. Positions 380–634 (FILHKMLGKG…RGDIRQHPLF (255 aa)) constitute a Protein kinase domain. Residues 386–394 (LGKGSFGKV) and Lys409 each bind ATP. The Proton acceptor role is filled by Asp504. Phosphothreonine; by PDPK1 is present on Thr538. Positions 635–706 (REINWEELER…INPGMETLIC (72 aa)) constitute an AGC-kinase C-terminal domain. Ser676 is modified (phosphoserine; by autocatalysis). Residue Ser685 is modified to Phosphoserine. Ser695 bears the Phosphoserine; by autocatalysis mark.

This sequence belongs to the protein kinase superfamily. AGC Ser/Thr protein kinase family. PKC subfamily. As to quaternary structure, part of a membrane raft complex composed at least of BCL10, CARD11, MALT1 and IKBKB. Interacts with GLRX3 (via N-terminus). Interacts with ECT2. Interacts with CCDC88A/GIV; the interaction leads to phosphorylation of CCDC88A and inhibition of its guanine nucleotide exchange factor activity. Interacts with CD28. Mg(2+) serves as cofactor. Post-translationally, autophosphorylation at Thr-219 is required for targeting to the TCR and cellular function of PRKCQ upon antigen receptor ligation. Following TCR stimulation, phosphorylated at Tyr-90 and Ser-685. As to expression, T-lymphocytes and skeletal muscle.

The protein localises to the cytoplasm. It is found in the cell membrane. It carries out the reaction L-seryl-[protein] + ATP = O-phospho-L-seryl-[protein] + ADP + H(+). The catalysed reaction is L-threonyl-[protein] + ATP = O-phospho-L-threonyl-[protein] + ADP + H(+). With respect to regulation, novel PKCs (PRKCD, PRKCE, PRKCH and PRKCQ) are calcium-insensitive, but activated by diacylglycerol (DAG) and phosphatidylserine. Three specific sites; Thr-538 (activation loop of the kinase domain), Ser-676 (turn motif) and Ser-695 (hydrophobic region), need to be phosphorylated for its full activation. Functionally, calcium-independent, phospholipid- and diacylglycerol (DAG)-dependent serine/threonine-protein kinase that mediates non-redundant functions in T-cell receptor (TCR) signaling, including T-cells activation, proliferation, differentiation and survival, by mediating activation of multiple transcription factors such as NF-kappa-B, JUN, NFATC1 and NFATC2. In TCR-CD3/CD28-co-stimulated T-cells, is required for the activation of NF-kappa-B and JUN, which in turn are essential for IL2 production, and participates in the calcium-dependent NFATC1 and NFATC2 transactivation. Mediates the activation of the canonical NF-kappa-B pathway (NFKB1) by direct phosphorylation of CARD11 on several serine residues, inducing CARD11 association with lipid rafts and recruitment of the BCL10-MALT1 complex, which then activates IKK complex, resulting in nuclear translocation and activation of NFKB1. May also play an indirect role in activation of the non-canonical NF-kappa-B (NFKB2) pathway. In the signaling pathway leading to JUN activation, acts by phosphorylating the mediator STK39/SPAK and may not act through MAP kinases signaling. Plays a critical role in TCR/CD28-induced NFATC1 and NFATC2 transactivation by participating in the regulation of reduced inositol 1,4,5-trisphosphate generation and intracellular calcium mobilization. After costimulation of T-cells through CD28 can phosphorylate CBLB and is required for the ubiquitination and subsequent degradation of CBLB, which is a prerequisite for the activation of TCR. During T-cells differentiation, plays an important role in the development of T-helper 2 (Th2) cells following immune and inflammatory responses, and, in the development of inflammatory autoimmune diseases, is necessary for the activation of IL17-producing Th17 cells. May play a minor role in Th1 response. Upon TCR stimulation, mediates T-cell protective survival signal by phosphorylating BAD, thus protecting T-cells from BAD-induced apoptosis, and by up-regulating BCL-X(L)/BCL2L1 levels through NF-kappa-B and JUN pathways. In platelets, regulates signal transduction downstream of the ITGA2B, CD36/GP4, F2R/PAR1 and F2RL3/PAR4 receptors, playing a positive role in 'outside-in' signaling and granule secretion signal transduction. May relay signals from the activated ITGA2B receptor by regulating the uncoupling of WASP and WIPF1, thereby permitting the regulation of actin filament nucleation and branching activity of the Arp2/3 complex. May mediate inhibitory effects of free fatty acids on insulin signaling by phosphorylating IRS1, which in turn blocks IRS1 tyrosine phosphorylation and downstream activation of the PI3K/AKT pathway. Phosphorylates MSN (moesin) in the presence of phosphatidylglycerol or phosphatidylinositol. Phosphorylates PDPK1 at 'Ser-504' and 'Ser-532' and negatively regulates its ability to phosphorylate PKB/AKT1. Phosphorylates CCDC88A/GIV and inhibits its guanine nucleotide exchange factor activity. Phosphorylates and activates LRRK1, which phosphorylates RAB proteins involved in intracellular trafficking. This Mus musculus (Mouse) protein is Protein kinase C theta type (Prkcq).